Here is a 342-residue protein sequence, read N- to C-terminus: Subtilisin-like serine protease Rho m 2.0101 (342 aa).

The propeptide at 1-30 (TMELLEDLIEQVRQLPMVNFIEKNSLVHAN) is removed in mature form. The region spanning 1-30 (TMELLEDLIEQVRQLPMVNFIEKNSLVHAN) is the Inhibitor I9 domain. A Peptidase S8 domain is found at 39-342 (PWGLARISHR…GQNLTKFWGH (304 aa)). Residues Asp75 and His107 each act as charge relay system in the active site. N-linked (GlcNAc...) asparagine glycans are attached at residues Asn137 and Asn171. Ser267 (charge relay system) is an active-site residue. Residue Asn335 is glycosylated (N-linked (GlcNAc...) asparagine).

It belongs to the peptidase S8 family.

Serine protease. This Rhodotorula mucilaginosa (Yeast) protein is Subtilisin-like serine protease Rho m 2.0101.